We begin with the raw amino-acid sequence, 767 residues long: Protein transport protein Sec23A (767 aa).

Zn(2+)-binding residues include Cys-61, Cys-66, Cys-85, and Cys-88. A Gelsolin-like repeat occupies 634–720; it reads PEPVLLDSSS…EHGGSQARFL (87 aa).

The protein belongs to the SEC23/SEC24 family. SEC23 subfamily. In terms of assembly, COPII is composed of at least five proteins: the Sec23/24 complex, the Sec13/31 complex and Sar1.

It is found in the cytoplasmic vesicle. Its subcellular location is the COPII-coated vesicle membrane. It localises to the endoplasmic reticulum membrane. The protein resides in the cytoplasm. The protein localises to the cytosol. In terms of biological role, component of the coat protein complex II (COPII) which promotes the formation of transport vesicles from the endoplasmic reticulum (ER). The coat has two main functions, the physical deformation of the endoplasmic reticulum membrane into vesicles and the selection of cargo molecules for their transport to the Golgi complex. The polypeptide is Protein transport protein Sec23A (Gallus gallus (Chicken)).